We begin with the raw amino-acid sequence, 365 residues long: MNKVRHFIDTQDLSKKEIFEIFRLMKMLKEARYCGAVPELLKNKTLAMIFEEPSTRTRVSFEAAMTLLGGHAQYLKPGELHLGVRESLYDTTKVLSHMCDGIMCRALKNETVLNLAKYADVPVLNGLTDYNHPTQAICDVFTMLEYMPATKNLEYEDIKFEDIKVVFIGDRTNVCSSTMHITTKLGMNFVHISPKRYQSPQEWIDIANENIKQANSGSVLVTDDLEQVRGADIVYTDLWWWVDQEDEAEERVKAFKPTYQVTPELMEKAGKQALFMHCLPASRNVEVYDEVIDSDQSIAFEQAENRLTAQMGLLVYYLYPQIDKSSNAVKDYYRGKVEAFMEHQDRSWKQRYTYNNDYAETKNKK.

Residues 54–58, arginine 105, and histidine 132 contribute to the carbamoyl phosphate site; that span reads STRTR. 277-280 lines the putrescine pocket; sequence HCLP.

Belongs to the aspartate/ornithine carbamoyltransferase superfamily. PTCase family. In terms of assembly, homotrimer.

The protein localises to the cytoplasm. The catalysed reaction is carbamoyl phosphate + putrescine = N-carbamoylputrescine + phosphate + H(+). It participates in amine and polyamine biosynthesis; putrescine biosynthesis via agmatine pathway; putrescine from N-carbamoylputrescine (transferase route): step 1/1. In terms of biological role, catalyzes the phosphorolysis of N-carbamoylputrescine to form carbamoyl phosphate and putrescine. Is involved in the degradation pathway of the polyamine agmatine. The chain is Putrescine carbamoyltransferase from Mycoplasma mycoides subsp. mycoides SC (strain CCUG 32753 / NCTC 10114 / PG1).